A 140-amino-acid polypeptide reads, in one-letter code: ATP synthase epsilon chain (140 aa).

It belongs to the ATPase epsilon chain family. In terms of assembly, F-type ATPases have 2 components, CF(1) - the catalytic core - and CF(0) - the membrane proton channel. CF(1) has five subunits: alpha(3), beta(3), gamma(1), delta(1), epsilon(1). CF(0) has three main subunits: a, b and c.

Its subcellular location is the cell inner membrane. Produces ATP from ADP in the presence of a proton gradient across the membrane. The polypeptide is ATP synthase epsilon chain (Herminiimonas arsenicoxydans).